The chain runs to 285 residues: Ribosomal RNA small subunit methyltransferase I (285 aa).

Belongs to the methyltransferase superfamily. RsmI family.

Its subcellular location is the cytoplasm. It catalyses the reaction cytidine(1402) in 16S rRNA + S-adenosyl-L-methionine = 2'-O-methylcytidine(1402) in 16S rRNA + S-adenosyl-L-homocysteine + H(+). In terms of biological role, catalyzes the 2'-O-methylation of the ribose of cytidine 1402 (C1402) in 16S rRNA. This Buchnera aphidicola subsp. Schizaphis graminum (strain Sg) protein is Ribosomal RNA small subunit methyltransferase I.